A 217-amino-acid polypeptide reads, in one-letter code: Outer-membrane lipoprotein LolB (217 aa).

The signal sequence occupies residues 1 to 20 (MSKALRTLALSGLVLVGLSA). Cys-21 is lipidated: N-palmitoyl cysteine. Cys-21 is lipidated: S-diacylglycerol cysteine.

The protein belongs to the LolB family. As to quaternary structure, monomer.

The protein localises to the cell outer membrane. Its function is as follows. Plays a critical role in the incorporation of lipoproteins in the outer membrane after they are released by the LolA protein. This chain is Outer-membrane lipoprotein LolB, found in Xanthomonas oryzae pv. oryzae (strain MAFF 311018).